The sequence spans 144 residues: Large ribosomal subunit protein uL11 (144 aa).

It belongs to the universal ribosomal protein uL11 family. As to quaternary structure, part of the ribosomal stalk of the 50S ribosomal subunit. Interacts with L10 and the large rRNA to form the base of the stalk. L10 forms an elongated spine to which L12 dimers bind in a sequential fashion forming a multimeric L10(L12)X complex. Post-translationally, one or more lysine residues are methylated.

Forms part of the ribosomal stalk which helps the ribosome interact with GTP-bound translation factors. This is Large ribosomal subunit protein uL11 from Corynebacterium glutamicum (strain R).